Consider the following 313-residue polypeptide: Porphobilinogen deaminase (313 aa).

C242 is modified (S-(dipyrrolylmethanemethyl)cysteine).

Belongs to the HMBS family. As to quaternary structure, monomer. It depends on dipyrromethane as a cofactor.

The catalysed reaction is 4 porphobilinogen + H2O = hydroxymethylbilane + 4 NH4(+). It participates in porphyrin-containing compound metabolism; protoporphyrin-IX biosynthesis; coproporphyrinogen-III from 5-aminolevulinate: step 2/4. Its function is as follows. Tetrapolymerization of the monopyrrole PBG into the hydroxymethylbilane pre-uroporphyrinogen in several discrete steps. The polypeptide is Porphobilinogen deaminase (Escherichia coli O7:K1 (strain IAI39 / ExPEC)).